A 560-amino-acid polypeptide reads, in one-letter code: Serine palmitoyltransferase 2 (560 aa).

A helical transmembrane segment spans residues 65–85 (PMLVAVLTYVGYGVLTLFGYL). Lysine 377 is subject to N6-(pyridoxal phosphate)lysine.

This sequence belongs to the class-II pyridoxal-phosphate-dependent aminotransferase family. As to quaternary structure, component of the serine palmitoyltransferase (SPT) complex, which is composed of SPTLC1, SPTLC2 or SPTLC3 and SPTSSA or SPTSSB. The heterodimer consisting of SPTLC1 and SPTLC2/SPTLC3 forms the catalytic core of the enzyme, while SPTSSA or SPTSSB subunits determine substrate specificity. SPT also interacts with ORMDL proteins, especially ORMDL3, which negatively regulate SPT activity in the presence of ceramides. Forms dimers of heterodimers with SPTLC1. Requires pyridoxal 5'-phosphate as cofactor. As to expression, expressed in a variety of tissues. Expressed in brains cortices (at protein level). Expressed in brown and white adipose tissues. Expressed in liver.

It is found in the endoplasmic reticulum membrane. The catalysed reaction is L-serine + hexadecanoyl-CoA + H(+) = 3-oxosphinganine + CO2 + CoA. It carries out the reaction octadecanoyl-CoA + L-serine + H(+) = 3-oxoeicosasphinganine + CO2 + CoA. It functions in the pathway lipid metabolism; sphingolipid metabolism. SPT complex catalytic activity is negatively regulated by ORMDL proteins, including ORMDL3, in the presence of ceramides. This mechanism allows to maintain ceramide levels at sufficient concentrations for the production of complex sphingolipids, but which prevents the accumulation of ceramides to levels that trigger apoptosis. In terms of biological role, component of the serine palmitoyltransferase multisubunit enzyme (SPT) that catalyzes the initial and rate-limiting step in sphingolipid biosynthesis by condensing L-serine and activated acyl-CoA (most commonly palmitoyl-CoA) to form long-chain bases. The SPT complex is composed of SPTLC1, SPTLC2 or SPTLC3 and SPTSSA or SPTSSB. Within this complex, the heterodimer consisting of SPTLC1 and SPTLC2/SPTLC3 forms the catalytic core. The composition of the serine palmitoyltransferase (SPT) complex determines the substrate preference. The SPTLC1-SPTLC2-SPTSSA complex shows a strong preference for C16-CoA substrate, while the SPTLC1-SPTLC3-SPTSSA isozyme uses both C14-CoA and C16-CoA as substrates, with a slight preference for C14-CoA. The SPTLC1-SPTLC2-SPTSSB complex shows a strong preference for C18-CoA substrate, while the SPTLC1-SPTLC3-SPTSSB isozyme displays an ability to use a broader range of acyl-CoAs, without apparent preference. Crucial for adipogenesis. This chain is Serine palmitoyltransferase 2, found in Mus musculus (Mouse).